A 375-amino-acid polypeptide reads, in one-letter code: 4,4'-diaponeurosporenoate glycosyltransferase (375 aa).

Transmembrane regions (helical) follow at residues 3-23 (WLSR…ALIF), 164-184 (FYEG…NVFS), 277-297 (IMTA…GLCL), and 330-350 (FSNL…KIFI).

This sequence belongs to the glycosyltransferase 2 family. CrtQ subfamily.

It localises to the cell membrane. The protein operates within carotenoid biosynthesis; staphyloxanthin biosynthesis; staphyloxanthin from farnesyl diphosphate: step 4/5. Its function is as follows. Catalyzes the glycosylation of 4,4'-diaponeurosporenoate, i.e. the esterification of glucose at the C1'' position with the carboxyl group of 4,4'-diaponeurosporenic acid, to form glycosyl-4,4'-diaponeurosporenoate. This is a step in the biosynthesis of staphyloxanthin, an orange pigment present in most staphylococci strains. The chain is 4,4'-diaponeurosporenoate glycosyltransferase (crtQ) from Staphylococcus aureus (strain USA300).